Reading from the N-terminus, the 394-residue chain is Chorismate synthase (394 aa).

Position 48 (R48) interacts with NADP(+). Residues 52–90 (QSMITTSRGEPDEVSIQSGLQDGYTTGTPIGMTIENKDA) are disordered. Over residues 66-79 (SIQSGLQDGYTTGT) the composition is skewed to polar residues. FMN-binding positions include 125–127 (RSS), G297, 312–316 (HAPTS), and R339.

This sequence belongs to the chorismate synthase family. FMNH2 serves as cofactor.

The catalysed reaction is 5-O-(1-carboxyvinyl)-3-phosphoshikimate = chorismate + phosphate. The protein operates within metabolic intermediate biosynthesis; chorismate biosynthesis; chorismate from D-erythrose 4-phosphate and phosphoenolpyruvate: step 7/7. Functionally, catalyzes the anti-1,4-elimination of the C-3 phosphate and the C-6 proR hydrogen from 5-enolpyruvylshikimate-3-phosphate (EPSP) to yield chorismate, which is the branch point compound that serves as the starting substrate for the three terminal pathways of aromatic amino acid biosynthesis. This reaction introduces a second double bond into the aromatic ring system. This is Chorismate synthase from Halobacterium salinarum (strain ATCC 700922 / JCM 11081 / NRC-1) (Halobacterium halobium).